The chain runs to 65 residues: Large ribosomal subunit protein bL35 (65 aa).

The protein belongs to the bacterial ribosomal protein bL35 family.

The sequence is that of Large ribosomal subunit protein bL35 from Methylobacillus flagellatus (strain ATCC 51484 / DSM 6875 / VKM B-1610 / KT).